A 716-amino-acid polypeptide reads, in one-letter code: Eosinophil peroxidase (716 aa).

The N-terminal stretch at 1–18 is a signal peptide; that stretch reads MMQQLLALVGALATLILT. Residues 19–140 constitute a propeptide that is removed on maturation; sequence QHAEGTAPAS…SGCALQDQAE (122 aa). N53 and N114 each carry an N-linked (GlcNAc...) asparagine glycan. The cysteines at positions 142 and 153 are disulfide-linked. Residue D233 participates in heme b binding. H234 functions as the Proton acceptor in the catalytic mechanism. Position 235 (D235) interacts with Ca(2+). 2 disulfides stabilise this stretch: C254–C264 and C258–C282. Ca(2+) is bound by residues T307, F309, D311, and S313. N-linked (GlcNAc...) asparagine glycosylation is found at N328 and N364. A disulfide bridge connects residues C360 and C371. Heme b-binding residues include E381 and H475. Y489 carries the post-translational modification 3'-nitrotyrosine. Disulfide bonds link C579–C636 and C677–C702. N709 is a glycosylation site (N-linked (GlcNAc...) asparagine).

The protein belongs to the peroxidase family. XPO subfamily. In terms of assembly, tetramer of two light chains and two heavy chains. The cofactor is Ca(2+). It depends on heme b as a cofactor.

It localises to the cytoplasmic granule. It catalyses the reaction 2 a phenolic donor + H2O2 = 2 a phenolic radical donor + 2 H2O. Its function is as follows. Mediates tyrosine nitration of secondary granule proteins in mature resting eosinophils. This is Eosinophil peroxidase (Epx) from Mus musculus (Mouse).